The chain runs to 508 residues: Cytochrome P450 monooxygenase pkfB (508 aa).

A helical membrane pass occupies residues 9–29 (FSLGLSQILVCLALLYAAIHI). N-linked (GlcNAc...) asparagine glycosylation is found at N57 and N305. Position 450 (C450) interacts with heme.

It belongs to the cytochrome P450 family. It depends on heme as a cofactor.

Its subcellular location is the membrane. The protein operates within secondary metabolite biosynthesis. Functionally, cytochrome P450 monooxygenase; part of the gene cluster that mediates the biosynthesis of aspernidine A, a prenylated isoindolinone. The starting point of the biosynthesis of aspernidin A is the production of orsellinaldehyde by the non-reducing polyketide synthase pkfA. Hydroxylation, methylation of one of the phenol groups, and prenylation, presumably catalyzed by the prenyltransferase pkfE, would be needed to yield aspernidine D. Subsequently, the cytochrome P450 monooxygenase pkfB is responsible for hydroxylation of aspernidine D to yield aspernidine E. The dehydrogenase pkfF may be responsible for further oxidation of aspernidine E to form a dialdehyde intermediate which is further transformed in a series of steps, some of which are enzyme-mediated, to generate aspernidine A. The possibility that additional enzymes outside of the cluster are involved in aspernidine A biosynthesis cannot be excluded. The protein is Cytochrome P450 monooxygenase pkfB of Emericella nidulans (strain FGSC A4 / ATCC 38163 / CBS 112.46 / NRRL 194 / M139) (Aspergillus nidulans).